The sequence spans 353 residues: Putative transcription factor MTF1 (353 aa).

Composition is skewed to polar residues over residues 11-26 (VTRS…TSPA) and 36-58 (EPSN…QQGN). 2 disordered regions span residues 11–96 (VTRS…ALPC) and 129–174 (FTTT…TTNP). 2 stretches are compositionally biased toward low complexity: residues 59–95 (TEAS…PALP) and 133–145 (NSSP…SPSS). Residues 148 to 164 (SHTRKNSKYTVRHHRTR) show a composition bias toward basic residues. Over residues 165 to 174 (QSSFNGTTNP) the composition is skewed to polar residues.

The protein resides in the nucleus. In terms of biological role, may be involved in transcriptional activation. The sequence is that of Putative transcription factor MTF1 (MTF1) from Mucor circinelloides f. lusitanicus (Mucor racemosus var. lusitanicus).